A 298-amino-acid chain; its full sequence is Glutamyl-Q tRNA(Asp) synthetase (298 aa).

L-glutamate is bound by residues 9–13 and Glu45; that span reads RFAPS. A 'HIGH' region motif is present at residues 12 to 22; it reads PSPSGELHFGS. The Zn(2+) site is built by Cys101, Cys103, Tyr115, and Cys119. L-glutamate contacts are provided by Tyr172 and Arg190. Residues 228–232 carry the 'KMSKS' region motif; that stretch reads KLSKQ. Position 231 (Lys231) interacts with ATP.

Belongs to the class-I aminoacyl-tRNA synthetase family. GluQ subfamily. Zn(2+) serves as cofactor.

Its function is as follows. Catalyzes the tRNA-independent activation of glutamate in presence of ATP and the subsequent transfer of glutamate onto a tRNA(Asp). Glutamate is transferred on the 2-amino-5-(4,5-dihydroxy-2-cyclopenten-1-yl) moiety of the queuosine in the wobble position of the QUC anticodon. This chain is Glutamyl-Q tRNA(Asp) synthetase, found in Salmonella typhi.